The chain runs to 197 residues: UPF0301 protein A2cp1_4106 (197 aa).

This sequence belongs to the UPF0301 (AlgH) family.

This is UPF0301 protein A2cp1_4106 from Anaeromyxobacter dehalogenans (strain 2CP-1 / ATCC BAA-258).